Here is a 296-residue protein sequence, read N- to C-terminus: Tyrosine recombinase XerC (296 aa).

One can recognise a Core-binding (CB) domain in the interval 1-84 (MNKIQESFLY…TLRSFYEFWM (84 aa)). One can recognise a Tyr recombinase domain in the interval 105–286 (YLPHFFYEEE…SNQQLRKVYL (182 aa)). Residues arginine 145, lysine 169, histidine 238, arginine 241, and histidine 264 contribute to the active site. Catalysis depends on tyrosine 273, which acts as the O-(3'-phospho-DNA)-tyrosine intermediate.

It belongs to the 'phage' integrase family. XerC subfamily. Forms a cyclic heterotetrameric complex composed of two molecules of XerC and two molecules of XerD.

The protein localises to the cytoplasm. Functionally, site-specific tyrosine recombinase, which acts by catalyzing the cutting and rejoining of the recombining DNA molecules. The XerC-XerD complex is essential to convert dimers of the bacterial chromosome into monomers to permit their segregation at cell division. It also contributes to the segregational stability of plasmids. This is Tyrosine recombinase XerC from Staphylococcus carnosus (strain TM300).